The chain runs to 504 residues: Xylose import ATP-binding protein XylG (504 aa).

2 consecutive ABC transporter domains span residues 6 to 243 (LEMQ…VGRE) and 262 to 504 (VRNF…TGGK). Position 38 to 45 (38 to 45 (GENGAGKS)) interacts with ATP.

The protein belongs to the ABC transporter superfamily. Xylose importer (TC 3.A.1.2.4) family. As to quaternary structure, the complex is composed of two ATP-binding proteins (XylG), two transmembrane proteins (XylH) and a solute-binding protein (XylF).

The protein resides in the cell membrane. The catalysed reaction is D-xylose(out) + ATP + H2O = D-xylose(in) + ADP + phosphate + H(+). Its function is as follows. Part of the ABC transporter complex XylFGH involved in xylose import. Responsible for energy coupling to the transport system. This chain is Xylose import ATP-binding protein XylG, found in Moorella thermoacetica (strain ATCC 39073 / JCM 9320).